A 260-amino-acid chain; its full sequence is HTH-type transcriptional repressor NanR (260 aa).

Residues 1 to 20 (MNPFDSQSEDASDAIGRSLG) are disordered. Residues 27–95 (KKLSEMVEEE…NGERARVSRP (69 aa)) form the HTH gntR-type domain. The segment at residues 55-74 (ERELMAFFNVGRPSVREALA) is a DNA-binding region (H-T-H motif).

Belongs to the NanR family.

Its function is as follows. Transcriptional repressor that controls expression of the genes required for the catabolism of sialic acids. The sequence is that of HTH-type transcriptional repressor NanR from Cronobacter sakazakii (strain ATCC BAA-894) (Enterobacter sakazakii).